The chain runs to 956 residues: Plasma membrane ATPase 1 (956 aa).

The Cytoplasmic portion of the chain corresponds to 1–65; that stretch reads MAEKPEVLDA…EKKESKFLKF (65 aa). A helical membrane pass occupies residues 66–85; sequence LGFMWNPLSWVMEAAAIMAI. The Extracellular portion of the chain corresponds to 86–97; that stretch reads ALANGGGKPPDW. Residues 98–118 form a helical membrane-spanning segment; sequence QDFVGIITLLIINSTISFIEE. Residues 119–247 are Cytoplasmic-facing; that stretch reads NNAGNAAAAL…GHFQKVLTAI (129 aa). A helical transmembrane segment spans residues 248 to 268; that stretch reads GNFCICSIAVGMIIEIIVMYP. The Extracellular segment spans residues 269-277; it reads IQHRKYRPG. A helical transmembrane segment spans residues 278-295; sequence IDNLLVLLIGGIPIAMPT. At 296-646 the chain is on the cytoplasmic side; sequence VLSVTMAIGS…LTSRAIFQRM (351 aa). Asp333 functions as the 4-aspartylphosphate intermediate in the catalytic mechanism. Mg(2+) contacts are provided by Asp592 and Asp596. Residues 647 to 666 form a helical membrane-spanning segment; it reads KNYTIYAVSITIRIVLGFML. Topologically, residues 667–674 are extracellular; it reads LALIWKFD. A helical transmembrane segment spans residues 675–697; the sequence is FPPFMVLIIAILNDGTIMTISKD. Over 698–713 the chain is Cytoplasmic; sequence RVKPSPLPDSWKLAEI. A helical transmembrane segment spans residues 714–734; sequence FTTGVVLGGYLAMMTVIFFWA. Residues 735 to 759 lie on the Extracellular side of the membrane; the sequence is AYKTNFFPRIFGVSTLEKTATDDFR. A helical transmembrane segment spans residues 760 to 780; sequence KLASAIYLQVSTISQALIFVT. At 781-792 the chain is on the cytoplasmic side; it reads RSRSWSFVERPG. Residues 793–813 traverse the membrane as a helical segment; sequence LLLVFAFFVAQLVATLIAVYA. The Extracellular portion of the chain corresponds to 814 to 821; the sequence is NWSFAAIE. Residues 822 to 842 traverse the membrane as a helical segment; that stretch reads GIGWGWAGVIWLYNIVTYIPL. Residues 843–956 are Cytoplasmic-facing; sequence DLIKFLIRYA…IETIQQSYTV (114 aa).

It belongs to the cation transport ATPase (P-type) (TC 3.A.3) family. Type IIIA subfamily. Possibly exists as a homodimer or a homotrimer.

The protein localises to the cell membrane. It catalyses the reaction ATP + H2O + H(+)(in) = ADP + phosphate + 2 H(+)(out). Functionally, the plasma membrane ATPase of plants and fungi is a hydrogen ion pump. The proton gradient it generates drives the active transport of nutrients by H(+)-symport. The resulting external acidification and/or internal alkinization may mediate growth responses. The protein is Plasma membrane ATPase 1 (LHA1) of Solanum lycopersicum (Tomato).